A 228-amino-acid chain; its full sequence is Cytidylate kinase (228 aa).

An ATP-binding site is contributed by 12–20 (GPSGSGKGT).

Belongs to the cytidylate kinase family. Type 1 subfamily.

The protein resides in the cytoplasm. It carries out the reaction CMP + ATP = CDP + ADP. The catalysed reaction is dCMP + ATP = dCDP + ADP. This is Cytidylate kinase from Pseudomonas putida (strain ATCC 47054 / DSM 6125 / CFBP 8728 / NCIMB 11950 / KT2440).